Here is a 209-residue protein sequence, read N- to C-terminus: Uridine kinase (209 aa).

12–19 provides a ligand contact to ATP; sequence GGSASGKT.

This sequence belongs to the uridine kinase family.

It localises to the cytoplasm. The catalysed reaction is uridine + ATP = UMP + ADP + H(+). It carries out the reaction cytidine + ATP = CMP + ADP + H(+). It participates in pyrimidine metabolism; CTP biosynthesis via salvage pathway; CTP from cytidine: step 1/3. It functions in the pathway pyrimidine metabolism; UMP biosynthesis via salvage pathway; UMP from uridine: step 1/1. The protein is Uridine kinase of Chloroflexus aurantiacus (strain ATCC 29366 / DSM 635 / J-10-fl).